A 464-amino-acid polypeptide reads, in one-letter code: ATP synthase subunit beta (464 aa).

148–155 provides a ligand contact to ATP; that stretch reads GGAGVGKT.

It belongs to the ATPase alpha/beta chains family. As to quaternary structure, F-type ATPases have 2 components, CF(1) - the catalytic core - and CF(0) - the membrane proton channel. CF(1) has five subunits: alpha(3), beta(3), gamma(1), delta(1), epsilon(1). CF(0) has three main subunits: a(1), b(2) and c(9-12). The alpha and beta chains form an alternating ring which encloses part of the gamma chain. CF(1) is attached to CF(0) by a central stalk formed by the gamma and epsilon chains, while a peripheral stalk is formed by the delta and b chains.

It is found in the cell inner membrane. The catalysed reaction is ATP + H2O + 4 H(+)(in) = ADP + phosphate + 5 H(+)(out). Produces ATP from ADP in the presence of a proton gradient across the membrane. The catalytic sites are hosted primarily by the beta subunits. The chain is ATP synthase subunit beta from Acinetobacter baylyi (strain ATCC 33305 / BD413 / ADP1).